The sequence spans 520 residues: Bifunctional purine biosynthesis protein PurH (520 aa).

Residues 1 to 147 form the MGS-like domain; sequence MAKIGRALIS…KNNRDVTVVV (147 aa).

It belongs to the PurH family.

It catalyses the reaction (6R)-10-formyltetrahydrofolate + 5-amino-1-(5-phospho-beta-D-ribosyl)imidazole-4-carboxamide = 5-formamido-1-(5-phospho-D-ribosyl)imidazole-4-carboxamide + (6S)-5,6,7,8-tetrahydrofolate. It carries out the reaction IMP + H2O = 5-formamido-1-(5-phospho-D-ribosyl)imidazole-4-carboxamide. It functions in the pathway purine metabolism; IMP biosynthesis via de novo pathway; 5-formamido-1-(5-phospho-D-ribosyl)imidazole-4-carboxamide from 5-amino-1-(5-phospho-D-ribosyl)imidazole-4-carboxamide (10-formyl THF route): step 1/1. The protein operates within purine metabolism; IMP biosynthesis via de novo pathway; IMP from 5-formamido-1-(5-phospho-D-ribosyl)imidazole-4-carboxamide: step 1/1. This Geobacter sp. (strain M21) protein is Bifunctional purine biosynthesis protein PurH.